Reading from the N-terminus, the 129-residue chain is Large-conductance mechanosensitive channel (129 aa).

The next 2 helical transmembrane spans lie at 10–30 (FAVK…GAFG) and 70–90 (AVML…VIAI).

The protein belongs to the MscL family. As to quaternary structure, homopentamer.

Its subcellular location is the cell inner membrane. Channel that opens in response to stretch forces in the membrane lipid bilayer. May participate in the regulation of osmotic pressure changes within the cell. The sequence is that of Large-conductance mechanosensitive channel from Actinobacillus pleuropneumoniae serotype 3 (strain JL03).